The chain runs to 305 residues: Ribonucleoside-diphosphate reductase small subunit (305 aa).

The Fe cation site is built by Glu-64, Glu-94, and His-97. Residue Tyr-101 is part of the active site. A helical transmembrane segment spans residues 150–170 (ILMFLIVEGIYFISSFYSISL). Fe cation-binding residues include Glu-157, Glu-191, and His-194.

The protein belongs to the ribonucleoside diphosphate reductase small chain family. In terms of assembly, heterotetramer composed of a homodimer of the large subunit (R1) and a homodimer of the small subunit (R2). Larger multisubunit protein complex are also active, composed of (R1)n(R2)n. Fe cation serves as cofactor.

It localises to the host membrane. The catalysed reaction is a 2'-deoxyribonucleoside 5'-diphosphate + [thioredoxin]-disulfide + H2O = a ribonucleoside 5'-diphosphate + [thioredoxin]-dithiol. Ribonucleoside-diphosphate reductase holoenzyme provides the precursors necessary for viral DNA synthesis. Allows virus growth in non-dividing cells, as well as reactivation from latency in infected hosts. Catalyzes the biosynthesis of deoxyribonucleotides from the corresponding ribonucleotides. In Homo sapiens (Human), this protein is Ribonucleoside-diphosphate reductase small subunit.